The primary structure comprises 366 residues: Carbamoyl phosphate synthase small chain (366 aa).

The CPSase stretch occupies residues 1–168; the sequence is MYGILVLEDG…KETVVYSADD (168 aa). Residues S45, G220, and G222 each coordinate L-glutamine. The Glutamine amidotransferase type-1 domain maps to 172–363; the sequence is KCVLIDCGVK…VELGIKFKAE (192 aa). C247 functions as the Nucleophile in the catalytic mechanism. Positions 248, 251, 289, 291, and 292 each coordinate L-glutamine. Active-site residues include H336 and E338.

It belongs to the CarA family. Composed of two chains; the small (or glutamine) chain promotes the hydrolysis of glutamine to ammonia, which is used by the large (or ammonia) chain to synthesize carbamoyl phosphate. Tetramer of heterodimers (alpha,beta)4.

The catalysed reaction is hydrogencarbonate + L-glutamine + 2 ATP + H2O = carbamoyl phosphate + L-glutamate + 2 ADP + phosphate + 2 H(+). The enzyme catalyses L-glutamine + H2O = L-glutamate + NH4(+). The protein operates within amino-acid biosynthesis; L-arginine biosynthesis; carbamoyl phosphate from bicarbonate: step 1/1. It participates in pyrimidine metabolism; UMP biosynthesis via de novo pathway; (S)-dihydroorotate from bicarbonate: step 1/3. Small subunit of the glutamine-dependent carbamoyl phosphate synthetase (CPSase). CPSase catalyzes the formation of carbamoyl phosphate from the ammonia moiety of glutamine, carbonate, and phosphate donated by ATP, constituting the first step of 2 biosynthetic pathways, one leading to arginine and/or urea and the other to pyrimidine nucleotides. The small subunit (glutamine amidotransferase) binds and cleaves glutamine to supply the large subunit with the substrate ammonia. The polypeptide is Carbamoyl phosphate synthase small chain (Methanococcus maripaludis (strain C6 / ATCC BAA-1332)).